We begin with the raw amino-acid sequence, 318 residues long: D-alanine--D-alanine ligase (318 aa).

The ATP-grasp domain maps to 116 to 315 (KQVWQSLGLP…FEQLSLAVLA (200 aa)). Position 146–201 (146–201 (MSRLGDLVMVKPAQEGSSIGMAKVSNAQQLAAAIQQAFEYDDKVLLEQFIQGSEYT)) interacts with ATP. Residues D269, E282, and N284 each coordinate Mg(2+).

This sequence belongs to the D-alanine--D-alanine ligase family. Requires Mg(2+) as cofactor. It depends on Mn(2+) as a cofactor.

The protein localises to the cytoplasm. It catalyses the reaction 2 D-alanine + ATP = D-alanyl-D-alanine + ADP + phosphate + H(+). The protein operates within cell wall biogenesis; peptidoglycan biosynthesis. Functionally, cell wall formation. The protein is D-alanine--D-alanine ligase of Pseudoalteromonas atlantica (strain T6c / ATCC BAA-1087).